Consider the following 454-residue polypeptide: Maintenance of mitochondrial morphology protein 1 (454 aa).

The Lumenal segment spans residues 1 to 117; that stretch reads MESNYTGMDG…SFSSWSFAQG (117 aa). The helical transmembrane segment at 118–138 threads the bilayer; the sequence is LIVGQVSVVLVLIFFIKFFIF. Residues 139–454 lie on the Cytoplasmic side of the membrane; that stretch reads SDSSTKTNPN…ESEPGRETHY (316 aa). Positions 144–164 are disordered; that stretch reads KTNPNPAKNSSSTNSLSGLSS. Residues 153 to 164 are compositionally biased toward low complexity; sequence SSSTNSLSGLSS. Residues 215–427 form the SMP-LTD domain; sequence PAESLDWFNV…EPRFQFIKLP (213 aa). A 1,2-diacyl-sn-glycero-3-phosphate is bound by residues arginine 253, tryptophan 411, arginine 415, tryptophan 430, arginine 432, and serine 433. Residues 434–454 are disordered; the sequence is KNTREGKADVDESEPGRETHY. Positions 435–454 are enriched in basic and acidic residues; it reads NTREGKADVDESEPGRETHY.

The protein belongs to the MMM1 family. In terms of assembly, homodimer. Component of the ER-mitochondria encounter structure (ERMES) or MDM complex, composed of MMM1, MDM10, MDM12 and MDM34. An MMM1 homodimer associates with one molecule of MDM12 on each side in a pairwise head-to-tail manner, and the SMP-LTD domains of MMM1 and MDM12 generate a continuous hydrophobic tunnel for phospholipid trafficking.

It localises to the endoplasmic reticulum membrane. In terms of biological role, component of the ERMES/MDM complex, which serves as a molecular tether to connect the endoplasmic reticulum (ER) and mitochondria. Components of this complex are involved in the control of mitochondrial shape and protein biogenesis, and function in nonvesicular lipid trafficking between the ER and mitochondria. Preferentially binds to glycerophospholipids such as phosphatidylcholoine (PC), phosphatidic acid (PA), phosphatidylglycerol (PG), and phosphatidylserine (PS), but not to phosphatidylethanolamine (PE). The MDM12-MMM1 subcomplex functions in the major beta-barrel assembly pathway that is responsible for biogenesis of all outer membrane beta-barrel proteins, and acts in a late step after the SAM complex. The MDM10-MDM12-MMM1 subcomplex further acts in the TOM40-specific pathway after the action of the MDM12-MMM1 complex. Essential for establishing and maintaining the structure of mitochondria and maintenance of mtDNA nucleoids. This is Maintenance of mitochondrial morphology protein 1 from Zygosaccharomyces rouxii (strain ATCC 2623 / CBS 732 / NBRC 1130 / NCYC 568 / NRRL Y-229).